A 56-amino-acid polypeptide reads, in one-letter code: Trypsin inhibitor 1 (56 aa).

Residues Met-1–Ser-25 form the signal peptide. Residues Gly-26 to Asn-39 constitute a propeptide that is removed on maturation. Positions Gly-40 to Asp-53 form a cross-link, cyclopeptide (Gly-Asp). Residues Cys-42 and Cys-50 are joined by a disulfide bond. A propeptide spanning residues Gly-54–Pro-56 is cleaved from the precursor.

This is a cyclic peptide.

Its function is as follows. Inhibits trypsin, cathepsin G, elastase, chymotrypsin and thrombin. Does not inhibit factor Xa. In Helianthus annuus (Common sunflower), this protein is Trypsin inhibitor 1.